Here is a 241-residue protein sequence, read N- to C-terminus: Probable transcriptional regulatory protein Neut_0281 (241 aa).

It belongs to the TACO1 family.

Its subcellular location is the cytoplasm. The protein is Probable transcriptional regulatory protein Neut_0281 of Nitrosomonas eutropha (strain DSM 101675 / C91 / Nm57).